Consider the following 283-residue polypeptide: Malonyl-[acyl-carrier protein] O-methyltransferase (283 aa).

This sequence belongs to the methyltransferase superfamily.

It carries out the reaction malonyl-[ACP] + S-adenosyl-L-methionine = malonyl-[ACP] methyl ester + S-adenosyl-L-homocysteine. It participates in cofactor biosynthesis; biotin biosynthesis. Its function is as follows. Converts the free carboxyl group of a malonyl-thioester to its methyl ester by transfer of a methyl group from S-adenosyl-L-methionine (SAM). It allows to synthesize pimeloyl-ACP via the fatty acid synthetic pathway. In Acetivibrio thermocellus (strain ATCC 27405 / DSM 1237 / JCM 9322 / NBRC 103400 / NCIMB 10682 / NRRL B-4536 / VPI 7372) (Clostridium thermocellum), this protein is Malonyl-[acyl-carrier protein] O-methyltransferase.